Here is a 355-residue protein sequence, read N- to C-terminus: RGG repeats nuclear RNA binding protein A (355 aa).

N-acetylalanine is present on Ala-2. The interval 26 to 225 is disordered; that stretch reads KIDKSKKSGQ…VEEKEPEDKE (200 aa). A compositionally biased stretch (low complexity) spans 37–47; the sequence is SSLPAKSAPKL. 2 stretches are compositionally biased toward gly residues: residues 67-81 and 114-141; these read RGGGGRGGFNRGRGG and GGGAPRGSFRGEGGGPGGGRRGGFSNEG. The Nuclear localization signal motif lies at 132–139; the sequence is GRRGGFSN. The span at 143-168 shows a compositional bias: basic and acidic residues; the sequence is DGERPRRAFERRSGTGRGSDFKRDGS. Positions 145 to 155 match the Arginine-rich RNA-binding motif E-R-P-R-R-X-[F/Y]-[E/D]-R-R-S motif; that stretch reads ERPRRAFERRS. Low complexity predominate over residues 177–190; sequence GEEIAAETEAVAGV. 2 stretches are compositionally biased toward basic and acidic residues: residues 191-202 and 209-225; these read ETEKDVGEKPAV and ANKEDTVVEEKEPEDKE. Residues 234 to 289 form the FF domain; sequence ILEEKKKALQSLTTSERKVDTKVFESMQQLSNKKSNDEIFIKLGSDKDKRKDDKEE. At Ser-268 the chain carries Phosphoserine. The span at 277-292 shows a compositional bias: basic and acidic residues; that stretch reads GSDKDKRKDDKEEKAK. The segment at 277–355 is disordered; that stretch reads GSDKDKRKDD…AAQFPSLGGK (79 aa). Positions 323–333 are enriched in gly residues; it reads GRGGVSSGESG. Position 351 is a phosphoserine (Ser-351).

It belongs to the SERBP1-HABP4 family. Expressed in seedlings, leaves, roots, inflorescences, and siliques. Constitutively expressed in seedlings and roots.

The protein localises to the cytoplasm. The protein resides in the perinuclear region. It localises to the nucleus. Ribosome-binding protein that acts as a regulator of mRNA translation by promoting ribosome inactivation. Binds RNA. Regulates responses to abscisic acid (ABA). Promotes stomata closure in drought conditions. Involved in resistance to salt and drought stresses via the accumulation of Pro. The polypeptide is RGG repeats nuclear RNA binding protein A (Arabidopsis thaliana (Mouse-ear cress)).